The following is a 181-amino-acid chain: MNLLRTFNATLARRPLATQVIVSGAVCGAGDAFTQYLTGQKSWDYKRTARFTCLAAVFIAPPLNVWFRVLERVRHSNRHAQVFSRMSIDQFMFSPFFNAIILVNLRLLEGFSFSKSVDKMKNDWYDVYTSSLRLWPAVQLINFYFVPLNYRVILIQVVAFFWNSWLSFKTQTPALEDPTIE.

A run of 4 helical transmembrane segments spans residues 20–38 (VIVS…QYLT), 48–70 (TARF…FRVL), 91–113 (FMFS…GFSF), and 140–162 (LINF…AFFW).

The protein belongs to the peroxisomal membrane protein PXMP2/4 family.

It is found in the mitochondrion inner membrane. Its function is as follows. Involved in mitochondria homeostasis. This chain is Mitochondrial inner membrane protein Mpv17, found in Caenorhabditis briggsae.